A 195-amino-acid polypeptide reads, in one-letter code: Rho-related protein racB (195 aa).

10 to 17 (GDGAVGKT) is a binding site for GTP. The short motif at 32 to 40 (YVPTVFDNY) is the Effector region element. GTP is bound by residues 57–61 (DTAGQ) and 115–118 (TKCD). Cys-192 bears the Cysteine methyl ester mark. Residue Cys-192 is the site of S-geranylgeranyl cysteine attachment. The propeptide at 193-195 (SIL) is removed in mature form.

It belongs to the small GTPase superfamily. Rho family. Interacts with pakB.

It is found in the cell membrane. In Dictyostelium discoideum (Social amoeba), this protein is Rho-related protein racB (racB).